We begin with the raw amino-acid sequence, 206 residues long: MIDEAIVQFDKALRTLFAPARSVRPTPGAGVPETHLGDRDRQHVAALMRVNHSGEICAQALYQGQSMSAGDLDVKRELARASDEETEHLAWTEQRISELGGRKSLLNPLWYGGSLALGLLAGRLGDRWSLGFLAETERQVEAHLDGHLEHLPPEDHKSREIIEQMKADEAHHADVALALGAHELPAPFRGAMRLMARVMTATAYRI.

Fe cation contacts are provided by glutamate 55, glutamate 85, histidine 88, glutamate 137, glutamate 169, and histidine 172.

This sequence belongs to the COQ7 family. Requires Fe cation as cofactor.

Its subcellular location is the cell membrane. It carries out the reaction a 5-methoxy-2-methyl-3-(all-trans-polyprenyl)benzene-1,4-diol + AH2 + O2 = a 3-demethylubiquinol + A + H2O. It participates in cofactor biosynthesis; ubiquinone biosynthesis. Catalyzes the hydroxylation of 2-nonaprenyl-3-methyl-6-methoxy-1,4-benzoquinol during ubiquinone biosynthesis. This Aromatoleum aromaticum (strain DSM 19018 / LMG 30748 / EbN1) (Azoarcus sp. (strain EbN1)) protein is 3-demethoxyubiquinol 3-hydroxylase.